The sequence spans 245 residues: Pyridoxine 5'-phosphate synthase (245 aa).

A 3-amino-2-oxopropyl phosphate-binding site is contributed by Asn7. 9–10 provides a ligand contact to 1-deoxy-D-xylulose 5-phosphate; it reads DH. A 3-amino-2-oxopropyl phosphate-binding site is contributed by Arg18. His43 (proton acceptor) is an active-site residue. The 1-deoxy-D-xylulose 5-phosphate site is built by Arg45 and His50. The active-site Proton acceptor is Glu70. Thr100 is a 1-deoxy-D-xylulose 5-phosphate binding site. His190 (proton donor) is an active-site residue. Residues Gly191 and 212-213 contribute to the 3-amino-2-oxopropyl phosphate site; that span reads GH.

This sequence belongs to the PNP synthase family. Homooctamer; tetramer of dimers.

Its subcellular location is the cytoplasm. The enzyme catalyses 3-amino-2-oxopropyl phosphate + 1-deoxy-D-xylulose 5-phosphate = pyridoxine 5'-phosphate + phosphate + 2 H2O + H(+). Its pathway is cofactor biosynthesis; pyridoxine 5'-phosphate biosynthesis; pyridoxine 5'-phosphate from D-erythrose 4-phosphate: step 5/5. Its function is as follows. Catalyzes the complicated ring closure reaction between the two acyclic compounds 1-deoxy-D-xylulose-5-phosphate (DXP) and 3-amino-2-oxopropyl phosphate (1-amino-acetone-3-phosphate or AAP) to form pyridoxine 5'-phosphate (PNP) and inorganic phosphate. The chain is Pyridoxine 5'-phosphate synthase from Prochlorococcus marinus (strain NATL2A).